The primary structure comprises 206 residues: Transmembrane emp24 domain-containing protein bai (206 aa).

The signal sequence occupies residues 1-20; sequence MARAALIVCLLMACAWSSHA. Topologically, residues 21-172 are lumenal; it reads VMFKLSPNTQ…RDTNEKTNSR (152 aa). The 111-residue stretch at 30-140 folds into the GOLD domain; the sequence is QKCLKEDIQA…LKPLEVDLKR (111 aa). The helical transmembrane segment at 173 to 193 threads the bilayer; the sequence is VLFFSIFSMCCLLGLATWQVL. Topologically, residues 194–206 are cytoplasmic; sequence YLRRYFKAKKLIE.

This sequence belongs to the EMP24/GP25L family.

It is found in the membrane. In terms of biological role, eca and bai are essential, though not redundant, for dorsoventral patterning of the embryo. Specifically required during early embryogenesis for the activity of maternal tkv, while the zygotic tkv is not affected. The protein is Transmembrane emp24 domain-containing protein bai of Drosophila erecta (Fruit fly).